The following is a 247-amino-acid chain: Large ribosomal subunit protein uL24m (247 aa).

Residues 84 to 117 (FFRGDRIEVLVGKDKGKQGIVTQVIPERNWVIVE) form the KOW domain.

Belongs to the universal ribosomal protein uL24 family. Component of the mitochondrial ribosome large subunit (39S) which comprises a 16S rRNA and about 50 distinct proteins.

The protein localises to the mitochondrion. This chain is Large ribosomal subunit protein uL24m (mRpL24), found in Drosophila melanogaster (Fruit fly).